We begin with the raw amino-acid sequence, 521 residues long: Citrinin biosynthesis cluster MFS transporter ctnC (521 aa).

Residues 1-29 (MKEEIDAPVSTDASGTDLENARDQPSGEK) form a disordered region. Helical transmembrane passes span 58–78 (SLIT…SSVF), 95–115 (VMTL…LVWG), 124–144 (LKPL…VAVA), 155–175 (FFLG…LADF), 182–202 (AIAI…GPIM), 237–257 (WTAW…FLTL), 313–333 (ILVC…LFFV), and 349–369 (GIAA…CLLV). The N-linked (GlcNAc...) asparagine glycan is linked to asparagine 383. The next 4 helical transmembrane spans lie at 392-412 (LPPM…FGWT), 417-437 (ISWA…LMIW), 465-485 (AVSA…GVDW), and 489-509 (LLGF…FYGA).

This sequence belongs to the major facilitator superfamily. CAR1 family.

Its subcellular location is the membrane. MFS transporter; part of the gene cluster that mediates the biosynthesis the mycotoxin citrinin, a hepato-nephrotoxic compound to humans due to inhibition of respiration complex III. This chain is Citrinin biosynthesis cluster MFS transporter ctnC (ctnC), found in Monascus purpureus (Red mold).